The sequence spans 139 residues: Nucleoside diphosphate kinase (139 aa).

Positions 9, 57, 85, 91, 102, and 112 each coordinate ATP. His115 acts as the Pros-phosphohistidine intermediate in catalysis.

This sequence belongs to the NDK family. As to quaternary structure, homotetramer. The cofactor is Mg(2+).

It is found in the cytoplasm. The catalysed reaction is a 2'-deoxyribonucleoside 5'-diphosphate + ATP = a 2'-deoxyribonucleoside 5'-triphosphate + ADP. The enzyme catalyses a ribonucleoside 5'-diphosphate + ATP = a ribonucleoside 5'-triphosphate + ADP. Major role in the synthesis of nucleoside triphosphates other than ATP. The ATP gamma phosphate is transferred to the NDP beta phosphate via a ping-pong mechanism, using a phosphorylated active-site intermediate. The protein is Nucleoside diphosphate kinase of Exiguobacterium sp. (strain ATCC BAA-1283 / AT1b).